The primary structure comprises 311 residues: Aldose reductase B (311 aa).

13 to 23 (DIHHIPMIGLG) provides a ligand contact to NADP(+). Tyrosine 54 (proton donor) is an active-site residue. Histidine 116 contributes to the substrate binding site. 219–273 (SPLGQGKCDLLSNETLKSIADKHNKTVANVIFKWLNQRGIVTIPKSSNPARIIEN) is a binding site for NADP(+).

The protein belongs to the aldo/keto reductase family.

It catalyses the reaction an alditol + NAD(+) = an aldose + NADH + H(+). The enzyme catalyses an alditol + NADP(+) = an aldose + NADPH + H(+). Functionally, catalyzes the NADPH-dependent reduction of a wide variety of carbonyl-containing compounds to their corresponding alcohols with a broad range of catalytic efficiencies. The chain is Aldose reductase B (alrB) from Dictyostelium discoideum (Social amoeba).